Reading from the N-terminus, the 211-residue chain is Imidazole glycerol phosphate synthase subunit HisH (211 aa).

Residues 3-211 (VIAVIDYDMG…VSQIKAPVLV (209 aa)) form the Glutamine amidotransferase type-1 domain. The active-site Nucleophile is the Cys81. Residues His186 and Glu188 contribute to the active site.

In terms of assembly, heterodimer of HisH and HisF.

Its subcellular location is the cytoplasm. The enzyme catalyses 5-[(5-phospho-1-deoxy-D-ribulos-1-ylimino)methylamino]-1-(5-phospho-beta-D-ribosyl)imidazole-4-carboxamide + L-glutamine = D-erythro-1-(imidazol-4-yl)glycerol 3-phosphate + 5-amino-1-(5-phospho-beta-D-ribosyl)imidazole-4-carboxamide + L-glutamate + H(+). It catalyses the reaction L-glutamine + H2O = L-glutamate + NH4(+). It participates in amino-acid biosynthesis; L-histidine biosynthesis; L-histidine from 5-phospho-alpha-D-ribose 1-diphosphate: step 5/9. Functionally, IGPS catalyzes the conversion of PRFAR and glutamine to IGP, AICAR and glutamate. The HisH subunit catalyzes the hydrolysis of glutamine to glutamate and ammonia as part of the synthesis of IGP and AICAR. The resulting ammonia molecule is channeled to the active site of HisF. The chain is Imidazole glycerol phosphate synthase subunit HisH from Cyanothece sp. (strain PCC 7425 / ATCC 29141).